A 189-amino-acid polypeptide reads, in one-letter code: Elongation factor P 2 (189 aa).

Belongs to the elongation factor P family.

It localises to the cytoplasm. The protein operates within protein biosynthesis; polypeptide chain elongation. Involved in peptide bond synthesis. Stimulates efficient translation and peptide-bond synthesis on native or reconstituted 70S ribosomes in vitro. Probably functions indirectly by altering the affinity of the ribosome for aminoacyl-tRNA, thus increasing their reactivity as acceptors for peptidyl transferase. The sequence is that of Elongation factor P 2 from Mesorhizobium japonicum (strain LMG 29417 / CECT 9101 / MAFF 303099) (Mesorhizobium loti (strain MAFF 303099)).